We begin with the raw amino-acid sequence, 88 residues long: Guanine nucleotide-binding protein subunit gamma (88 aa).

Cysteine 84 carries S-palmitoyl cysteine lipidation. Position 85 is a cysteine methyl ester (cysteine 85). Residue cysteine 85 is the site of S-farnesyl cysteine attachment. The propeptide at 86 to 88 (TIM) is removed in mature form.

It belongs to the G protein gamma family. In terms of assembly, g proteins are composed of 3 units, alpha, beta and gamma.

It is found in the membrane. The polypeptide is Guanine nucleotide-binding protein subunit gamma (Candida glabrata (strain ATCC 2001 / BCRC 20586 / JCM 3761 / NBRC 0622 / NRRL Y-65 / CBS 138) (Yeast)).